A 252-amino-acid polypeptide reads, in one-letter code: Transcriptional regulatory protein HptR (252 aa).

The region spanning 3 to 118 (KVVICDDERI…QLEVILGRLV (116 aa)) is the Response regulatory domain. Asp-55 is subject to 4-aspartylphosphate. Residues 153–250 (NQIVDQIKQS…QMSPSDYCKQ (98 aa)) enclose the HTH araC/xylS-type domain. DNA-binding regions (H-T-H motif) lie at residues 170–191 (SDLI…KDHV) and 217–240 (HYEI…KKYL).

Phosphorylated by HptS.

It localises to the cytoplasm. Its function is as follows. Member of the two-component regulatory system HptS/HptR that regulates genes involved in hexose phosphate transport system in response to changes in extracellular phosphate sources. Activates uhpT expression to facilitate glucose-6-phosphate/G6P utilization by directly binding to its promoter. Antagonizes CcpA-dependent transcription of a subset of CcpA-regulated genes involved in antibiotic susceptibility. This chain is Transcriptional regulatory protein HptR (hptR), found in Staphylococcus aureus (strain Mu50 / ATCC 700699).